Consider the following 251-residue polypeptide: B3 domain-containing protein At2g24670 (251 aa).

The tract at residues 48–111 (TTPSTVMESK…SSKTREPTPG (64 aa)) is disordered. Over residues 56–70 (SKSHIHDHSLRESPT) the composition is skewed to basic and acidic residues. Positions 153–249 (VSQIVELEFL…TLYFALVPLY (97 aa)) form a DNA-binding region, TF-B3.

The protein resides in the nucleus. The polypeptide is B3 domain-containing protein At2g24670 (Arabidopsis thaliana (Mouse-ear cress)).